The primary structure comprises 582 residues: uncharacterized protein (582 aa).

Helical transmembrane passes span 17 to 37, 57 to 77, 131 to 151, 156 to 176, 239 to 259, and 271 to 291; these read VAML…LPTV, LGAV…GAVY, MTAT…IMAI, ALTW…YWII, ALML…LIWF, and VGSL…VLMA. Residues 17–300 form the ABC transmembrane type-1 domain; that stretch reads VAMLMMLQLV…ATMTLAVLPR (284 aa). Residues 335 to 571 enclose the ABC transporter domain; the sequence is VRLAGATFTY…CPTYAEFAAS (237 aa). 369-376 provides a ligand contact to ATP; the sequence is GSTGSGKS.

It belongs to the ABC transporter superfamily.

The protein resides in the cell membrane. This is an uncharacterized protein from Mycobacterium tuberculosis (strain CDC 1551 / Oshkosh).